Reading from the N-terminus, the 355-residue chain is UDP-N-acetylglucosamine--N-acetylmuramyl-(pentapeptide) pyrophosphoryl-undecaprenol N-acetylglucosamine transferase (355 aa).

UDP-N-acetyl-alpha-D-glucosamine-binding positions include 14–16 (TGG), asparagine 126, arginine 162, serine 190, isoleucine 243, 262–267 (ALTVSE), and glutamine 287.

It belongs to the glycosyltransferase 28 family. MurG subfamily.

Its subcellular location is the cell inner membrane. It catalyses the reaction di-trans,octa-cis-undecaprenyl diphospho-N-acetyl-alpha-D-muramoyl-L-alanyl-D-glutamyl-meso-2,6-diaminopimeloyl-D-alanyl-D-alanine + UDP-N-acetyl-alpha-D-glucosamine = di-trans,octa-cis-undecaprenyl diphospho-[N-acetyl-alpha-D-glucosaminyl-(1-&gt;4)]-N-acetyl-alpha-D-muramoyl-L-alanyl-D-glutamyl-meso-2,6-diaminopimeloyl-D-alanyl-D-alanine + UDP + H(+). It participates in cell wall biogenesis; peptidoglycan biosynthesis. Cell wall formation. Catalyzes the transfer of a GlcNAc subunit on undecaprenyl-pyrophosphoryl-MurNAc-pentapeptide (lipid intermediate I) to form undecaprenyl-pyrophosphoryl-MurNAc-(pentapeptide)GlcNAc (lipid intermediate II). This Vibrio vulnificus (strain CMCP6) protein is UDP-N-acetylglucosamine--N-acetylmuramyl-(pentapeptide) pyrophosphoryl-undecaprenol N-acetylglucosamine transferase.